Consider the following 182-residue polypeptide: UPF0397 protein BCE_2667 (182 aa).

A run of 5 helical transmembrane segments spans residues 9 to 29, 40 to 60, 71 to 91, 114 to 134, and 142 to 162; these read VVAI…GFSI, AILT…IGLI, WGIW…MGLI, ITGL…DIIV, and IVIQ…VLGL.

It belongs to the UPF0397 family.

The protein localises to the cell membrane. This Bacillus cereus (strain ATCC 10987 / NRS 248) protein is UPF0397 protein BCE_2667.